A 548-amino-acid chain; its full sequence is Luciferin 4-monooxygenase (548 aa).

Positions 546-548 match the Microbody targeting signal motif; sequence AKM.

This sequence belongs to the ATP-dependent AMP-binding enzyme family. Mg(2+) serves as cofactor.

It is found in the peroxisome. It carries out the reaction firefly D-luciferin + ATP + O2 = firefly oxyluciferin + hnu + AMP + CO2 + diphosphate. In terms of biological role, produces green light with a wavelength of 544 nm. The sequence is that of Luciferin 4-monooxygenase from Nipponoluciola cruciata (Genji firefly).